The following is a 469-amino-acid chain: Neuraminidase (469 aa).

The Intravirion segment spans residues 1–9; the sequence is MNPNQKIIT. The chain crosses the membrane as a helical span at residues 10–30; it reads IGSVSLTIATICFLMQIAILV. The involved in apical transport and lipid raft association stretch occupies residues 11–33; the sequence is GSVSLTIATICFLMQIAILVTTV. Residues 31–469 are Virion surface-facing; sequence TTVTLHFKQY…DGADINLMPI (439 aa). Positions 36–88 are hypervariable stalk region; sequence HFKQYECSSPPNNQVMPCEPIIIERNITEIVYLTNTTIDKEICPKLVEYRNWS. Residues asparagine 61, asparagine 70, and asparagine 86 are each glycosylated (N-linked (GlcNAc...) asparagine; by host). The segment at 91-469 is head of neuraminidase; it reads QCKITGFAPF…DGADINLMPI (379 aa). Intrachain disulfides connect cysteine 92/cysteine 417, cysteine 124/cysteine 129, cysteine 183/cysteine 230, cysteine 232/cysteine 237, cysteine 278/cysteine 291, cysteine 280/cysteine 289, cysteine 318/cysteine 337, and cysteine 421/cysteine 447. Arginine 118 contacts substrate. Asparagine 146 is a glycosylation site (N-linked (GlcNAc...) asparagine; by host). Residue aspartate 151 is the Proton donor/acceptor of the active site. Residue arginine 152 participates in substrate binding. N-linked (GlcNAc...) asparagine; by host glycosylation is found at asparagine 200 and asparagine 234. 276 to 277 serves as a coordination point for substrate; the sequence is EE. A substrate-binding site is contributed by arginine 292. Aspartate 293, glycine 297, and aspartate 324 together coordinate Ca(2+). Substrate is bound at residue arginine 371. A glycan (N-linked (GlcNAc...) asparagine; by host) is linked at asparagine 402. Residue tyrosine 406 is the Nucleophile of the active site.

This sequence belongs to the glycosyl hydrolase 34 family. Homotetramer. Ca(2+) is required as a cofactor. N-glycosylated.

It localises to the virion membrane. The protein localises to the host apical cell membrane. The enzyme catalyses Hydrolysis of alpha-(2-&gt;3)-, alpha-(2-&gt;6)-, alpha-(2-&gt;8)- glycosidic linkages of terminal sialic acid residues in oligosaccharides, glycoproteins, glycolipids, colominic acid and synthetic substrates.. Inhibited by the neuraminidase inhibitors zanamivir (Relenza) and oseltamivir (Tamiflu). These drugs interfere with the release of progeny virus from infected cells and are effective against all influenza strains. Resistance to neuraminidase inhibitors is quite rare. Catalyzes the removal of terminal sialic acid residues from viral and cellular glycoconjugates. Cleaves off the terminal sialic acids on the glycosylated HA during virus budding to facilitate virus release. Additionally helps virus spread through the circulation by further removing sialic acids from the cell surface. These cleavages prevent self-aggregation and ensure the efficient spread of the progeny virus from cell to cell. Otherwise, infection would be limited to one round of replication. Described as a receptor-destroying enzyme because it cleaves a terminal sialic acid from the cellular receptors. May facilitate viral invasion of the upper airways by cleaving the sialic acid moieties on the mucin of the airway epithelial cells. Likely to plays a role in the budding process through its association with lipid rafts during intracellular transport. May additionally display a raft-association independent effect on budding. Plays a role in the determination of host range restriction on replication and virulence. Sialidase activity in late endosome/lysosome traffic seems to enhance virus replication. This Aves (whales) protein is Neuraminidase.